A 454-amino-acid polypeptide reads, in one-letter code: Enhancer of mRNA-decapping protein 3 (454 aa).

The region spanning 1-61 (MSVADFYGSN…IKDLRILPKN (61 aa)) is the Sm domain. The DFDF domain occupies 87-123 (SKNKWSMDCDEEFDFAANLEKFDKKQVFAEFREKDKK). The disordered stretch occupies residues 173 to 192 (SSSSNGHVTPGSKKGSRETL). One can recognise a YjeF N-terminal domain in the interval 222 to 431 (LSQGIALAIA…NLGTGSQTWA (210 aa)).

The protein belongs to the EDC3 family. Homodimer. Interacts with dcp2.

The protein resides in the cytoplasm. It localises to the P-body. Functionally, stimulates decapping of both stable and unstable mRNA during mRNA decay. Stimulates decapping presumably by preventing the DCP1-DCP2 decapping complex from adopting an inactive conformation. Together with pdc1, acts as a scaffolding protein sufficient for the phase transition of the components of the 5' to 3' mRNA degradation machinery to form P-bodies. Intermolecular interactions between the edc3 Sm domain and at least 10 helical leucine-rich motifs in dcp2 and pdc1 build the core of the interaction network of this spontaneous clustering process. The sequence is that of Enhancer of mRNA-decapping protein 3 (edc3) from Schizosaccharomyces pombe (strain 972 / ATCC 24843) (Fission yeast).